The primary structure comprises 214 residues: Osteoclast-stimulating factor 1 (214 aa).

At S2 the chain carries N-acetylserine. Residues 12-71 (GQVKVFRALYTFEPRTPDELYFEEGDIIYITDMSDTNWWKGTCKGRTGLIPSNYVAEQAE) enclose the SH3 domain. 3 ANK repeats span residues 72-101 (SIDN…GVNG), 105-135 (AGST…ELNQ), and 139-168 (LGDT…RTDL). Phosphoserine occurs at positions 202 and 213.

As to quaternary structure, interacts with SRC and SMN1. Interacts with FASLG.

The protein localises to the cytoplasm. Its function is as follows. Induces bone resorption, acting probably through a signaling cascade which results in the secretion of factor(s) enhancing osteoclast formation and activity. The protein is Osteoclast-stimulating factor 1 (OSTF1) of Bos taurus (Bovine).